Consider the following 422-residue polypeptide: Putative acid phosphatase 5 (422 aa).

The signal sequence occupies residues Met-1–Gly-13. The active-site Nucleophile is the His-40. N-linked (GlcNAc...) asparagine glycosylation is found at Asn-104, Asn-210, and Asn-218. 3 cysteine pairs are disulfide-bonded: Cys-152-Cys-363, Cys-205-Cys-302, and Cys-338-Cys-342. The active-site Proton donor is Asp-279. N-linked (GlcNAc...) asparagine glycans are attached at residues Asn-312 and Asn-323.

This sequence belongs to the histidine acid phosphatase family.

It catalyses the reaction a phosphate monoester + H2O = an alcohol + phosphate. This chain is Putative acid phosphatase 5 (pho-5), found in Caenorhabditis elegans.